The following is an 87-amino-acid chain: Phosphoribosyl-ATP pyrophosphatase (87 aa).

Belongs to the PRA-PH family.

Its subcellular location is the cytoplasm. The enzyme catalyses 1-(5-phospho-beta-D-ribosyl)-ATP + H2O = 1-(5-phospho-beta-D-ribosyl)-5'-AMP + diphosphate + H(+). The protein operates within amino-acid biosynthesis; L-histidine biosynthesis; L-histidine from 5-phospho-alpha-D-ribose 1-diphosphate: step 2/9. This Thermobifida fusca (strain YX) protein is Phosphoribosyl-ATP pyrophosphatase.